The chain runs to 553 residues: Putative transport protein YidE (553 aa).

5 consecutive transmembrane segments (helical) span residues 4–24, 28–48, 65–85, 95–115, and 158–178; these read IALT…IGNV, GVGL…HFVS, FGLI…FFAS, LFAV…HKLF, and MSYA…MWML. 2 RCK C-terminal domains span residues 191–276 and 279–361; these read QQHE…VIGQ and DTSL…VLGN. The next 6 helical transmembrane spans lie at 371–391, 393–413, 439–459, 464–484, 493–513, and 533–553; these read MLPV…PVFV, GFPA…ALIL, IVLF…HTLV, LSWI…VGIL, YLTM…LAFA, and LVMF…WSIG.

It belongs to the AAE transporter (TC 2.A.81) family. YidE subfamily.

It localises to the cell membrane. The sequence is that of Putative transport protein YidE from Escherichia coli O127:H6 (strain E2348/69 / EPEC).